The chain runs to 354 residues: Nicotinate-nucleotide--dimethylbenzimidazole phosphoribosyltransferase (354 aa).

The active-site Proton acceptor is Glu-319.

It belongs to the CobT family.

The enzyme catalyses 5,6-dimethylbenzimidazole + nicotinate beta-D-ribonucleotide = alpha-ribazole 5'-phosphate + nicotinate + H(+). It functions in the pathway nucleoside biosynthesis; alpha-ribazole biosynthesis; alpha-ribazole from 5,6-dimethylbenzimidazole: step 1/2. Its function is as follows. Catalyzes the synthesis of alpha-ribazole-5'-phosphate from nicotinate mononucleotide (NAMN) and 5,6-dimethylbenzimidazole (DMB). The sequence is that of Nicotinate-nucleotide--dimethylbenzimidazole phosphoribosyltransferase from Chlorobium chlorochromatii (strain CaD3).